Here is a 121-residue protein sequence, read N- to C-terminus: Pancreatic progenitor cell differentiation and proliferation factor (121 aa).

Disordered stretches follow at residues 22–47 (GSTS…PGLQ) and 101–121 (SRQL…PPPS). Positions 23 to 33 (STSSNSSCGSS) are enriched in low complexity. The span at 101 to 110 (SRQLSESSDS) shows a compositional bias: polar residues.

This sequence belongs to the PPDPF family.

Probable regulator of exocrine pancreas development. The protein is Pancreatic progenitor cell differentiation and proliferation factor (ppdpf) of Salmo salar (Atlantic salmon).